Here is a 446-residue protein sequence, read N- to C-terminus: tRNA modification GTPase MnmE (446 aa).

The (6S)-5-formyl-5,6,7,8-tetrahydrofolate site is built by R22, E80, and K119. Positions G215 to G370 constitute a TrmE-type G domain. N225 serves as a coordination point for K(+). GTP-binding positions include N225–T230, T244–T250, and D269–G272. Mg(2+) is bound at residue S229. K(+) contacts are provided by T244, I246, and T249. Position 250 (T250) interacts with Mg(2+). A (6S)-5-formyl-5,6,7,8-tetrahydrofolate-binding site is contributed by K446.

It belongs to the TRAFAC class TrmE-Era-EngA-EngB-Septin-like GTPase superfamily. TrmE GTPase family. In terms of assembly, homodimer. Heterotetramer of two MnmE and two MnmG subunits. K(+) serves as cofactor.

It localises to the cytoplasm. Its function is as follows. Exhibits a very high intrinsic GTPase hydrolysis rate. Involved in the addition of a carboxymethylaminomethyl (cmnm) group at the wobble position (U34) of certain tRNAs, forming tRNA-cmnm(5)s(2)U34. This Legionella pneumophila subsp. pneumophila (strain Philadelphia 1 / ATCC 33152 / DSM 7513) protein is tRNA modification GTPase MnmE.